Consider the following 439-residue polypeptide: Protein translocase subunit SecY (439 aa).

The next 10 helical transmembrane spans lie at 19–39 (ILFTIFILFVFRLGAHITVPG), 68–88 (YSLFAMGVSPYITASIIVQLL), 116–136 (YITLVLAMAQSIGITAGFQAM), 151–171 (LMIGAILTTGSMVVTWMGEQI), 176–196 (FGSGVSVIIFAGIVSSIPSAV), 216–236 (WLFVIGLVLSAIIIIYVTTFV), 269–289 (VIPVIFAGSITTAPATILQFL), 312–332 (WTGMLFYALLIVLFTFFYSFV), 373–393 (VGALFLGLISIIPIAAQNVWG), and 396–416 (KIVALGGTSLLILIQVAIQAV).

This sequence belongs to the SecY/SEC61-alpha family. Component of the Sec protein translocase complex. Heterotrimer consisting of SecY, SecE and SecG subunits. The heterotrimers can form oligomers, although 1 heterotrimer is thought to be able to translocate proteins. Interacts with the ribosome. Interacts with SecDF, and other proteins may be involved. Interacts with SecA.

It localises to the cell membrane. Its function is as follows. The central subunit of the protein translocation channel SecYEG. Consists of two halves formed by TMs 1-5 and 6-10. These two domains form a lateral gate at the front which open onto the bilayer between TMs 2 and 7, and are clamped together by SecE at the back. The channel is closed by both a pore ring composed of hydrophobic SecY resides and a short helix (helix 2A) on the extracellular side of the membrane which forms a plug. The plug probably moves laterally to allow the channel to open. The ring and the pore may move independently. This is Protein translocase subunit SecY from Lactococcus lactis subsp. lactis (strain IL1403) (Streptococcus lactis).